The primary structure comprises 33 residues: Brevinin-2Rk (33 aa).

A disulfide bridge links C27 with C33.

Expressed by the skin glands.

The protein localises to the secreted. In terms of biological role, antimicrobial peptide. The chain is Brevinin-2Rk from Pelophylax ridibundus (Marsh frog).